The sequence spans 239 residues: MSKAQTLSAADRAKLEALIGHDFAEKERLDRALTHASARTEKGSNYERLEFLGDRVLGLCIAELLFRTFGTAGEGELSVRLNQLVSAETCAAVADELNLHLYIRTGADVKKLTGKRMMNVRADVVESLIAAIYLDGGLEVARRFILRYWQGRAVRADGAKRDAKTELQEWSHAKFGVTPIYRVDERSGPDHDPRFRVTVEVAGIKPESGVERSKRAAEQVAATKMLEREGIWQQSPAGN.

The RNase III domain maps to 12–137 (RAKLEALIGH…LIAAIYLDGG (126 aa)). E50 is a Mg(2+) binding site. D54 is a catalytic residue. Residues D123 and E126 each contribute to the Mg(2+) site. E126 is an active-site residue. The region spanning 162–231 (DAKTELQEWS…ATKMLEREGI (70 aa)) is the DRBM domain.

Belongs to the ribonuclease III family. As to quaternary structure, homodimer. It depends on Mg(2+) as a cofactor.

It localises to the cytoplasm. It catalyses the reaction Endonucleolytic cleavage to 5'-phosphomonoester.. Its function is as follows. Digests double-stranded RNA. Involved in the processing of primary rRNA transcript to yield the immediate precursors to the large and small rRNAs (23S and 16S). Processes some mRNAs, and tRNAs when they are encoded in the rRNA operon. Processes pre-crRNA and tracrRNA of type II CRISPR loci if present in the organism. In Rhizobium etli (strain ATCC 51251 / DSM 11541 / JCM 21823 / NBRC 15573 / CFN 42), this protein is Ribonuclease 3.